A 172-amino-acid polypeptide reads, in one-letter code: Large ribosomal subunit protein uL10 (172 aa).

This sequence belongs to the universal ribosomal protein uL10 family. As to quaternary structure, part of the ribosomal stalk of the 50S ribosomal subunit. The N-terminus interacts with L11 and the large rRNA to form the base of the stalk. The C-terminus forms an elongated spine to which L12 dimers bind in a sequential fashion forming a multimeric L10(L12)X complex.

Its function is as follows. Forms part of the ribosomal stalk, playing a central role in the interaction of the ribosome with GTP-bound translation factors. This is Large ribosomal subunit protein uL10 from Rhizobium meliloti (strain 1021) (Ensifer meliloti).